The primary structure comprises 429 residues: Endoglucanase type C (429 aa).

The signal sequence occupies residues 1-18; the sequence is MKSLSLILSALAVQVAVA. Residue glutamine 19 is modified to Pyrrolidone carboxylic acid. 9 disulfides stabilise this stretch: cysteine 36–cysteine 42, cysteine 66–cysteine 88, cysteine 78–cysteine 84, cysteine 156–cysteine 383, cysteine 190–cysteine 213, cysteine 194–cysteine 212, cysteine 233–cysteine 252, cysteine 241–cysteine 246, and cysteine 257–cysteine 333. An N-linked (GlcNAc...) asparagine glycan is attached at asparagine 74. The Nucleophile role is filled by glutamate 215. Glutamate 220 functions as the Proton donor in the catalytic mechanism. Residues asparagine 265 and asparagine 318 are each glycosylated (N-linked (GlcNAc...) asparagine).

Belongs to the glycosyl hydrolase 7 (cellulase C) family.

The enzyme catalyses Endohydrolysis of (1-&gt;4)-beta-D-glucosidic linkages in cellulose, lichenin and cereal beta-D-glucans.. In Fusarium oxysporum (Fusarium vascular wilt), this protein is Endoglucanase type C.